Here is a 468-residue protein sequence, read N- to C-terminus: Acid phosphatase PHO1 (468 aa).

The N-terminal stretch at 1–22 is a signal peptide; that stretch reads MFSPILSLEIILALATLQSVFA. The active-site Nucleophile is the His-84. Asn-163, Asn-196, Asn-256, and Asn-321 each carry an N-linked (GlcNAc...) asparagine glycan. Asp-346 serves as the catalytic Proton donor. Residues Asn-360 and Asn-453 are each glycosylated (N-linked (GlcNAc...) asparagine).

It belongs to the histidine acid phosphatase family.

It catalyses the reaction a phosphate monoester + H2O = an alcohol + phosphate. This Komagataella pastoris (Yeast) protein is Acid phosphatase PHO1 (PHO1).